A 449-amino-acid polypeptide reads, in one-letter code: Probable D-serine dehydratase (449 aa).

An N6-(pyridoxal phosphate)lysine modification is found at Lys-119.

This sequence belongs to the serine/threonine dehydratase family. DsdA subfamily. Requires pyridoxal 5'-phosphate as cofactor.

It carries out the reaction D-serine = pyruvate + NH4(+). This is Probable D-serine dehydratase from Pseudomonas putida (strain ATCC 700007 / DSM 6899 / JCM 31910 / BCRC 17059 / LMG 24140 / F1).